The primary structure comprises 524 residues: MQEFYARVWNTKEMNLLKSLAAVSSMTMFSRVLGFARDAIVARIFGAGMATDAFFVAFKLPNLLRRIFAEGAFSQAFVPILAEYKSKQGEEATRIFVAYVSGLLTLALAVVTVAGMLAAPWVIMVTAPGFADTADKFALTTQLLRITFPYILLISLASLVGAILNTWNRFSIPAFAPTFLNISMIGFALFAAPYFNPPVLALAWAVTVGGVLQLVYQLPYLKKIGMLVLPRINFRDTGAMRVVKQMGPAILGVSVSQISLIINTIFASFLASGSVSWMYYADRLMEFPSGVLGVALGTILLPSLSKSFASGNHDEYCRLMDWGLRLCFLLALPSAVALGILAKPLTVSLFQYGKFTAFDAAMTQRALIAYSVGLIGLIVVKVLAPGFYSRQDIKTPVKIAIVTLIMTQLMNLAFIGPLKHAGLSLSIGLAACLNASLLYWQLRKQNIFTPQPGWMWFLMRLIISVLVMAAVLFGVLHIMPEWSQGSMLWRLLRLMAVVIAGIAAYFAALAVLGFKVKEFVRRTA.

The next 13 helical transmembrane spans lie at 44–64 (IFGA…PNLL), 103–123 (LLTL…PWVI), 146–166 (ITFP…ILNT), 172–192 (IPAF…LFAA), 195–215 (FNPP…LQLV), 250–270 (ILGV…ASFL), 284–304 (LMEF…LPSL), 322–342 (WGLR…GILA), 367–387 (LIAY…APGF), 396–416 (PVKI…AFIG), 420–440 (HAGL…LLYW), 456–476 (WFLM…FGVL), and 494–514 (LMAV…VLGF).

Belongs to the MurJ/MviN family.

It is found in the cell inner membrane. Its pathway is cell wall biogenesis; peptidoglycan biosynthesis. Involved in peptidoglycan biosynthesis. Transports lipid-linked peptidoglycan precursors from the inner to the outer leaflet of the cytoplasmic membrane. In Salmonella typhimurium (strain LT2 / SGSC1412 / ATCC 700720), this protein is Probable lipid II flippase MurJ.